The primary structure comprises 692 residues: Elongation factor G 2 (692 aa).

In terms of domain architecture, tr-type G spans 8–283; it reads EKTRNIGIMA…AVIDYMPSPV (276 aa). Residues 17–24, 81–85, and 135–138 contribute to the GTP site; these read AHIDAGKT, DTPGH, and NKMD.

This sequence belongs to the TRAFAC class translation factor GTPase superfamily. Classic translation factor GTPase family. EF-G/EF-2 subfamily.

The protein localises to the cytoplasm. Its function is as follows. Catalyzes the GTP-dependent ribosomal translocation step during translation elongation. During this step, the ribosome changes from the pre-translocational (PRE) to the post-translocational (POST) state as the newly formed A-site-bound peptidyl-tRNA and P-site-bound deacylated tRNA move to the P and E sites, respectively. Catalyzes the coordinated movement of the two tRNA molecules, the mRNA and conformational changes in the ribosome. The sequence is that of Elongation factor G 2 from Syntrophotalea carbinolica (strain DSM 2380 / NBRC 103641 / GraBd1) (Pelobacter carbinolicus).